A 390-amino-acid polypeptide reads, in one-letter code: Bifunctional enzyme IspD/IspF (390 aa).

The 2-C-methyl-D-erythritol 4-phosphate cytidylyltransferase stretch occupies residues 1–229 (MAAGRGERAG…RQDHAVFPDI (229 aa)). The interval 230 to 390 (RTGNGYDVHS…TVIYPGEVPE (161 aa)) is 2-C-methyl-D-erythritol 2,4-cyclodiphosphate synthase. Positions 236 and 238 each coordinate a divalent metal cation. Residues 236–238 (DVH) and 262–263 (HS) contribute to the 4-CDP-2-C-methyl-D-erythritol 2-phosphate site. His-270 lines the a divalent metal cation pocket. 4-CDP-2-C-methyl-D-erythritol 2-phosphate-binding positions include 284 to 286 (DIG), 360 to 363 (TTNE), Phe-367, and Arg-370.

The protein in the N-terminal section; belongs to the IspD/TarI cytidylyltransferase family. IspD subfamily. This sequence in the C-terminal section; belongs to the IspF family. A divalent metal cation serves as cofactor.

It catalyses the reaction 2-C-methyl-D-erythritol 4-phosphate + CTP + H(+) = 4-CDP-2-C-methyl-D-erythritol + diphosphate. The catalysed reaction is 4-CDP-2-C-methyl-D-erythritol 2-phosphate = 2-C-methyl-D-erythritol 2,4-cyclic diphosphate + CMP. Its pathway is isoprenoid biosynthesis; isopentenyl diphosphate biosynthesis via DXP pathway; isopentenyl diphosphate from 1-deoxy-D-xylulose 5-phosphate: step 2/6. It functions in the pathway isoprenoid biosynthesis; isopentenyl diphosphate biosynthesis via DXP pathway; isopentenyl diphosphate from 1-deoxy-D-xylulose 5-phosphate: step 4/6. Bifunctional enzyme that catalyzes the formation of 4-diphosphocytidyl-2-C-methyl-D-erythritol from CTP and 2-C-methyl-D-erythritol 4-phosphate (MEP) (IspD), and catalyzes the conversion of 4-diphosphocytidyl-2-C-methyl-D-erythritol 2-phosphate (CDP-ME2P) to 2-C-methyl-D-erythritol 2,4-cyclodiphosphate (ME-CPP) with a corresponding release of cytidine 5-monophosphate (CMP) (IspF). The sequence is that of Bifunctional enzyme IspD/IspF from Brucella abortus biovar 1 (strain 9-941).